Reading from the N-terminus, the 448-residue chain is Tapasin (448 aa).

The first 20 residues, 1–20, serve as a signal peptide directing secretion; the sequence is MKSLSLLLAVALGLATAVSA. Residues 21–414 are Lumenal-facing; sequence GPAVIECWFV…LSGPSLEDSI (394 aa). Cys-27 and Cys-91 are joined by a disulfide. The N-linked (GlcNAc...) asparagine glycan is linked to Asn-253. The Ig-like C1-type domain occupies 292–399; sequence PKVSLMPATL…PASGRSAEVT (108 aa). Cys-315 and Cys-382 are oxidised to a cystine. Residues 415–435 form a helical membrane-spanning segment; the sequence is GLFLSAFFLLGLFKALGWAAV. The Cytoplasmic segment spans residues 436-448; that stretch reads YLSTCKDSKKKAE.

Heterodimer with PDIA3; disulfide-linked. Obligatory mediator for the interaction between newly assembled MHC class I molecules, calreticulin, PDIA3 and TAP. Up to 4 MHC class I/tapasin complexes bind to 1 TAP. Interacts with HLA-G-B2M complex; this interaction is required for loading of high affinity peptides. On its own or as part of MHC class I peptide loading complex, interacts with ligand-free MR1 or MR1-B2M complex, providing for stable MR1 pools ready for metabolite antigen processing.

Its subcellular location is the endoplasmic reticulum membrane. Its function is as follows. Involved in the association of MHC class I with transporter associated with antigen processing (TAP) and in the assembly of MHC class I with peptide (peptide loading). This chain is Tapasin (TAPBP), found in Chlorocebus aethiops (Green monkey).